Here is a 467-residue protein sequence, read N- to C-terminus: Fumarate hydratase class II (467 aa).

Substrate is bound by residues 98-100, Arg126, 129-132, 139-141, and Thr187; these read SGT, HPND, and SSN. The active-site Proton donor/acceptor is His188. Ser318 is a catalytic residue. Substrate is bound by residues Ser319 and 324 to 326; that span reads KVN.

The protein belongs to the class-II fumarase/aspartase family. Fumarase subfamily. In terms of assembly, homotetramer.

It is found in the cytoplasm. It catalyses the reaction (S)-malate = fumarate + H2O. The protein operates within carbohydrate metabolism; tricarboxylic acid cycle; (S)-malate from fumarate: step 1/1. Functionally, involved in the TCA cycle. Catalyzes the stereospecific interconversion of fumarate to L-malate. The chain is Fumarate hydratase class II from Shigella flexneri.